A 271-amino-acid chain; its full sequence is Dirigent protein 17 (271 aa).

Over residues 1–12 (MEDTGSIKQEAQ) the composition is skewed to polar residues. The interval 1–22 (MEDTGSIKQEAQSHPPGIFEIP) is disordered. Asn255 is a glycosylation site (N-linked (GlcNAc...) asparagine).

It belongs to the plant dirigent protein family. Homodimer.

The protein localises to the secreted. The protein resides in the extracellular space. It localises to the apoplast. Dirigent proteins impart stereoselectivity on the phenoxy radical-coupling reaction, yielding optically active lignans from two molecules of coniferyl alcohol in the biosynthesis of lignans, flavonolignans, and alkaloids and thus plays a central role in plant secondary metabolism. The polypeptide is Dirigent protein 17 (DIR17) (Arabidopsis thaliana (Mouse-ear cress)).